Reading from the N-terminus, the 307-residue chain is MKQPYNHGVLFYHEHSGLKDIHNGIGEVAKSLSSMCKHLSLQLSENKGDIIKYCKSIKNENYSSDVDVLFILGGDGTLNELVNGVMQYQLNLPIGVIPGGTFNDFTKTLQLHPNFKTASEQLLTSHAESYDVLKVNDLYVLNFVGLGLIVQNAENVQDGSKDIFGKFSYIRSTVKTLLNPVKFDFSLTVDGETKEGNTSMMLIANGPNIGGGQIPLTDLSPQDGRANTFVFNDQTLNILNDILKKRDSMNWNEITQGIDHISGKHITLSTNPSMKVDIDGEINLETPIEIQVLPKAIQLLTATEQNN.

In terms of domain architecture, DAGKc spans glutamine 3 to tyrosine 139. Residues serine 44, glycine 74 to glutamate 80, and threonine 101 each bind ATP. Mg(2+)-binding residues include serine 220, aspartate 223, and arginine 225. Residue glutamate 281 is the Proton acceptor of the active site.

The protein belongs to the diacylglycerol/lipid kinase family. Requires Mg(2+) as cofactor.

Its function is as follows. May catalyze the ATP-dependent phosphorylation of lipids other than diacylglycerol (DAG). The sequence is that of Putative lipid kinase SE_0507 from Staphylococcus epidermidis (strain ATCC 12228 / FDA PCI 1200).